Consider the following 240-residue polypeptide: Biosynthetic peptidoglycan transglycosylase (240 aa).

Residues 16-36 (VLMALLCLFLIYELAMFSMVV) traverse the membrane as a helical segment.

Belongs to the glycosyltransferase 51 family.

The protein localises to the cell inner membrane. It catalyses the reaction [GlcNAc-(1-&gt;4)-Mur2Ac(oyl-L-Ala-gamma-D-Glu-L-Lys-D-Ala-D-Ala)](n)-di-trans,octa-cis-undecaprenyl diphosphate + beta-D-GlcNAc-(1-&gt;4)-Mur2Ac(oyl-L-Ala-gamma-D-Glu-L-Lys-D-Ala-D-Ala)-di-trans,octa-cis-undecaprenyl diphosphate = [GlcNAc-(1-&gt;4)-Mur2Ac(oyl-L-Ala-gamma-D-Glu-L-Lys-D-Ala-D-Ala)](n+1)-di-trans,octa-cis-undecaprenyl diphosphate + di-trans,octa-cis-undecaprenyl diphosphate + H(+). It functions in the pathway cell wall biogenesis; peptidoglycan biosynthesis. Peptidoglycan polymerase that catalyzes glycan chain elongation from lipid-linked precursors. The protein is Biosynthetic peptidoglycan transglycosylase of Bordetella avium (strain 197N).